Here is a 1057-residue protein sequence, read N- to C-terminus: MDAAGRGCHLLPLPAARGPARAPAAAAAAAASPPGPCSGAACAPSAAAGAGAMNPSSSAGEEKGATGGSSSSGSGAGSCCLGAEGGADPRGAGSAAAAGAAALDEPAAAGQKEKDEALEEKLRNLTFRKQVSYRKAISRAGLQHLAPAHPLSLPVANGPAKEPRATLDWSENAVNGEHLWLETNVSGDLCYLGEENCQVRFAKSALRRKCAVCKIVVHTACIEQLEKINFRCKPTFREGGSRSPRENFVRHHWVHRRRQEGKCKQCGKGFQQKFSFHSKEIVAISCSWCKQAFHNKVTCFMLHHIEEPCSLGAHAAVIVPPTWIIKVKKPQNSLKASNRKKKRTSFKRKASKRGMEQENKGRPFVIKPISSPLMKPLLVFVNPKSGGNQGTKVLQMFMWYLNPRQVFDLSQEGPKDALELYRKVPNLRILACGGDGTVGWILSILDELQLSPQPPVGVLPLGTGNDLARTLNWGGGYTDEPVSKILCQVEDGTVVQLDRWNLHVERNPDLPPEELEDGVCKLPLNVFNNYFSLGFDAHVTLEFHESREANPEKFNSRFRNKMFYAGAAFSDFLQRSSRDLSKHVKVVCDGTDLTPKIQELKFQCIVFLNIPRYCAGTMPWGNPGDHHDFEPQRHDDGYIEVIGFTMASLAALQVGGHGERLHQCREVMLLTYKSIPMQVDGEPCRLAPAMIRISLRNQANMVQKSKRRTSMPLLNDPQSVPDRLRIRVNKISLQDYEGFHYDKEKLREASIPLGILVVRGDCDLETCRMYIDRLQEDLQSVSSGSQRVHYQDHETSFPRALSAQRLSPRWCFLDATSADRFYRIDRSQEHLHFVMEISQDEIFILDPDMVVSQPAGTPPGMPDLVVEQASGISDWWNPALRKRMLSDSGLGMIAPYYEDSDLKDLSHSRVLQSPVSSEDHAILQAVIAGDLMKLIESYKNGGSLLIQGPDHCSLLHYAAKTGNGEIVKYILDHGPSELLDMADSETGETALHKAACQRNRAVCQLLVDAGASLRKTDSKGKTPQERAQQAGDPDLAAYLESRQNYKVIGHEDLETAV.

Residues 15 to 59 (AARGPARAPAAAAAAAASPPGPCSGAACAPSAAAGAGAMNPSSSA) show a composition bias toward low complexity. 2 disordered regions span residues 15–74 (AARG…SSGS) and 334–358 (LKASNRKKKRTSFKRKASKRGMEQE). Residues 337-352 (SNRKKKRTSFKRKASK) show a composition bias toward basic residues. Positions 372–507 (PLMKPLLVFV…DRWNLHVERN (136 aa)) constitute a DAGKc domain. 2 ANK repeats span residues 950–979 (DHCSLLHYAAKTGNGEIVKYILDHGPSELL) and 986–1015 (TGETALHKAACQRNRAVCQLLVDAGASLRK). Positions 1014 to 1024 (RKTDSKGKTPQ) are enriched in basic and acidic residues. A disordered region spans residues 1014 to 1033 (RKTDSKGKTPQERAQQAGDP). Positions 1055–1057 (TAV) match the PDZ-binding motif.

The protein belongs to the eukaryotic diacylglycerol kinase family. Interacts (via PDZ-binding motif) with DLG4; controls the localization of DGKI to the synapse. Interacts (via PDZ-binding motif) with DLG1. Interacts (via PDZ-binding motif) with DLG2. Interacts (via PDZ-binding motif) with DLG3. May interact with RASGRP3; involved in the regulation of RASGRP3 activity. As to expression, specifically expressed in brain and retina. In brain, highly expressed in hippocampus, caudate nucleus, occipital pole, cerebral cortex, and cerebellum. Also detected in kidney.

The protein localises to the cell projection. It localises to the axon. The protein resides in the dendrite. Its subcellular location is the presynapse. It is found in the postsynapse. The protein localises to the postsynaptic density. It localises to the synaptic cell membrane. The protein resides in the cytoplasmic vesicle. Its subcellular location is the secretory vesicle. It is found in the synaptic vesicle membrane. The protein localises to the cytoplasm. It localises to the cytosol. The protein resides in the nucleus. The catalysed reaction is a 1,2-diacyl-sn-glycerol + ATP = a 1,2-diacyl-sn-glycero-3-phosphate + ADP + H(+). It catalyses the reaction 1,2-di-(9Z-octadecenoyl)-sn-glycerol + ATP = 1,2-di-(9Z-octadecenoyl)-sn-glycero-3-phosphate + ADP + H(+). The enzyme catalyses 1-octadecanoyl-2-(5Z,8Z,11Z,14Z-eicosatetraenoyl)-sn-glycerol + ATP = 1-octadecanoyl-2-(5Z,8Z,11Z,14Z-eicosatetraenoyl)-sn-glycero-3-phosphate + ADP + H(+). It carries out the reaction 1-octadecanoyl-2-(9Z,12Z)-octadecadienoyl-sn-glycerol + ATP = 1-octadecanoyl-2-(9Z,12Z-octadecadienoyl)-sn-glycero-3-phosphate + ADP + H(+). The protein operates within lipid metabolism; glycerolipid metabolism. Its function is as follows. Diacylglycerol kinase that converts diacylglycerol/DAG into phosphatidic acid/phosphatidate/PA and regulates the respective levels of these two bioactive lipids. Thereby, acts as a central switch between the signaling pathways activated by these second messengers with different cellular targets and opposite effects in numerous biological processes. Has probably no preference for any of the diacylglycerols in terms of the acyl chain composition, especially for the acyl chain at the sn-2 position. By controlling the diacylglycerol/DAG-mediated activation of RASGRP3, negatively regulates the Rap1 signaling pathway. May play a role in presynaptic diacylglycerol/DAG signaling and control neurotransmitter release during metabotropic glutamate receptor-dependent long-term depression. The polypeptide is Diacylglycerol kinase iota (Homo sapiens (Human)).